Here is a 345-residue protein sequence, read N- to C-terminus: Eukaryotic translation initiation factor 3 subunit F (345 aa).

The MPN domain occupies 30–166 (VVIQPQAIFS…TRAYISAPVG (137 aa)). A disordered region spans residues 310–345 (EGASAEAGAQRGQRGGKGGRGGQQRTQERASEEVRA). Positions 312-321 (ASAEAGAQRG) are enriched in low complexity. Gly residues predominate over residues 322–331 (QRGGKGGRGG). Residues 335-345 (TQERASEEVRA) are compositionally biased toward basic and acidic residues.

Belongs to the eIF-3 subunit F family. In terms of assembly, component of the eukaryotic translation initiation factor 3 (eIF-3) complex.

The protein resides in the cytoplasm. In terms of biological role, component of the eukaryotic translation initiation factor 3 (eIF-3) complex, which is involved in protein synthesis of a specialized repertoire of mRNAs and, together with other initiation factors, stimulates binding of mRNA and methionyl-tRNAi to the 40S ribosome. The eIF-3 complex specifically targets and initiates translation of a subset of mRNAs involved in cell proliferation. The polypeptide is Eukaryotic translation initiation factor 3 subunit F (Aspergillus fumigatus (strain CBS 144.89 / FGSC A1163 / CEA10) (Neosartorya fumigata)).